A 601-amino-acid polypeptide reads, in one-letter code: ATP-dependent lipid A-core flippase (601 aa).

Residues 28–328 (LLSVCGLIVY…LTRVNAEFQR (301 aa)) enclose the ABC transmembrane type-1 domain. The next 6 helical transmembrane spans lie at 32-52 (CGLIVYGLVDAAFISFIGPFI), 81-101 (VLLMAPIVVILMFSLRGFANF), 160-180 (ALISIVRDGVTVIGMLGLMFY), 183-203 (WKLSLCILVIGPIMGLVITIV), 267-287 (AVSQPLIMVIGSFALAFVLYA), and 296-316 (DLTAGTFATILGAMMAMLQPI). In terms of domain architecture, ABC transporter spans 360–597 (LRFDNVSFSY…GGMYAKLYQM (238 aa)). 394 to 401 (GRSGSGKS) is a binding site for ATP.

This sequence belongs to the ABC transporter superfamily. Lipid exporter (TC 3.A.1.106) family. Homodimer.

It is found in the cell inner membrane. It catalyses the reaction ATP + H2O + lipid A-core oligosaccharideSide 1 = ADP + phosphate + lipid A-core oligosaccharideSide 2.. Its function is as follows. Involved in lipopolysaccharide (LPS) biosynthesis. Translocates lipid A-core from the inner to the outer leaflet of the inner membrane. Transmembrane domains (TMD) form a pore in the inner membrane and the ATP-binding domain (NBD) is responsible for energy generation. In Shewanella sp. (strain MR-4), this protein is ATP-dependent lipid A-core flippase.